The following is a 154-amino-acid chain: NADPH-dependent 7-cyano-7-deazaguanine reductase (154 aa).

Cys-52 serves as the catalytic Thioimide intermediate. Catalysis depends on Asp-59, which acts as the Proton donor. Substrate-binding positions include 74–76 (VES) and 93–94 (HE).

Belongs to the GTP cyclohydrolase I family. QueF type 1 subfamily.

It localises to the cytoplasm. It catalyses the reaction 7-aminomethyl-7-carbaguanine + 2 NADP(+) = 7-cyano-7-deazaguanine + 2 NADPH + 3 H(+). It participates in tRNA modification; tRNA-queuosine biosynthesis. Catalyzes the NADPH-dependent reduction of 7-cyano-7-deazaguanine (preQ0) to 7-aminomethyl-7-deazaguanine (preQ1). The sequence is that of NADPH-dependent 7-cyano-7-deazaguanine reductase from Rhizobium rhizogenes (strain K84 / ATCC BAA-868) (Agrobacterium radiobacter).